The following is a 493-amino-acid chain: Glutamyl-tRNA(Gln) amidotransferase subunit A (493 aa).

Residues Lys-79 and Ser-159 each act as charge relay system in the active site. The active-site Acyl-ester intermediate is the Ser-183.

This sequence belongs to the amidase family. GatA subfamily. As to quaternary structure, heterotrimer of A, B and C subunits.

It catalyses the reaction L-glutamyl-tRNA(Gln) + L-glutamine + ATP + H2O = L-glutaminyl-tRNA(Gln) + L-glutamate + ADP + phosphate + H(+). In terms of biological role, allows the formation of correctly charged Gln-tRNA(Gln) through the transamidation of misacylated Glu-tRNA(Gln) in organisms which lack glutaminyl-tRNA synthetase. The reaction takes place in the presence of glutamine and ATP through an activated gamma-phospho-Glu-tRNA(Gln). The sequence is that of Glutamyl-tRNA(Gln) amidotransferase subunit A from Brucella anthropi (strain ATCC 49188 / DSM 6882 / CCUG 24695 / JCM 21032 / LMG 3331 / NBRC 15819 / NCTC 12168 / Alc 37) (Ochrobactrum anthropi).